The primary structure comprises 75 residues: Porwaprin-d (75 aa).

The first 24 residues, 1–24, serve as a signal peptide directing secretion; it reads MSSGGLLLLLGLLTLWAELTPVSS. One can recognise a WAP domain in the interval 27 to 72; that stretch reads RPKKPGLCPPRPQKPPCVRECKNDWRCPGEQKCCRYGCIYECRDPI. 4 disulfides stabilise this stretch: C34–C60, C43–C64, C47–C59, and C53–C68.

Belongs to the venom waprin family. Expressed by the venom gland.

The protein resides in the secreted. Functionally, damages membranes of susceptible bacteria. Has no hemolytic activity. Not toxic to mice. Does not inhibit the proteinases elastase and cathepsin G. The chain is Porwaprin-d from Pseudechis porphyriacus (Red-bellied black snake).